The primary structure comprises 151 residues: UPF0178 protein PST_0536 (151 aa).

This sequence belongs to the UPF0178 family.

The polypeptide is UPF0178 protein PST_0536 (Stutzerimonas stutzeri (strain A1501) (Pseudomonas stutzeri)).